The primary structure comprises 90 residues: uncharacterized protein (90 aa).

The signal sequence occupies residues 1–18; that stretch reads MKTLPVLVLSLTLLTVFS. Residues 28–50 form a disordered region; the sequence is QAKQLLRSRRQDRPSKPGFPDEP.

It localises to the secreted. This is an uncharacterized protein from Homo sapiens (Human).